Consider the following 198-residue polypeptide: uncharacterized protein (198 aa).

The disordered stretch occupies residues 166–198 (GYEPDEKARKKRERVKRSEVEDQLKINVKPTRR).

This is an uncharacterized protein from Coxiella burnetii (strain RSA 493 / Nine Mile phase I).